We begin with the raw amino-acid sequence, 491 residues long: Immediate early protein IE1 (491 aa).

Positions 1–11 (MESSAKRKMDP) are enriched in basic and acidic residues. The segment at 1-24 (MESSAKRKMDPDNPDEGPSSKVPR) is nuclear localization signal. The tract at residues 1 to 30 (MESSAKRKMDPDNPDEGPSSKVPRPETPVT) is disordered. The interaction with host PML, interference with PML sumoylation and disruption of PML-associated nuclear bodies stretch occupies residues 132-346 (ILDKVHEPFE…SVMKRRIEEI (215 aa)). The tract at residues 373–445 (AIAEESDEEE…EEGAQEERED (73 aa)) is interaction with host STAT2. The segment at 410–420 (ATIPLSSVIVA) is modulation of STAT3/STAT1 signaling. Positions 410 to 445 (ATIPLSSVIVAENSDQEESEQSDEEEEEGAQEERED) are interaction with host STAT3. Residues 421 to 472 (ENSDQEESEQSDEEEEEGAQEEREDTVSVKSEPVSEIEEVAPEEEEDGAEEP) form an acidic region. Residues 421-491 (ENSDQEESEQ…PMVTRSKADQ (71 aa)) are disordered. Acidic residues predominate over residues 423-444 (SDQEESEQSDEEEEEGAQEERE). The segment at 449-452 (VKSE) is interaction with host SUMO1. Lys-450 participates in a covalent cross-link: Glycyl lysine isopeptide (Lys-Gly) (interchain with G-Cter in SUMO). Positions 455–470 (SEIEEVAPEEEEDGAE) are enriched in acidic residues. The tract at residues 475–491 (SGGKSTHPMVTRSKADQ) is chromosome-tethering domain (CTD), binding to histones.

Belongs to the HHV-5 IE1 protein family. Forms homodimers. Interacts with human p53/TP53; this interaction inhibits p53/TP53-dependent transactivation activity. Interacts with host STAT1. Interacts with host STAT2; this interaction promotes viral growth and counteracts the antiviral interferon response. May also interact with the host STAT1-STAT2 heterodimer. Interacts with host STAT3; this interaction leads to STAT3 nuclear accumulation and disruption of IL6-induced STAT3 phosphorylation. Interacts with host PML; this interaction inhibits host PML de novo sumoylation and probably inhibits PML regulation of type I and type II interferon-induced gene expression. Interacts with host DAXX. Interacts with host SP100. Interacts with host E2F1. Interacts with host RB1. Interacts with host HDAC1; this interaction inhibits histone deacetylation and promotes viral transcription. Interacts with host HDAC2; this interaction inhibits histone deacetylation and promotes viral transcription. Interacts with host HDAC3; this interaction inhibits histone deacetylation and promotes viral transcription. Interacts with host PLSCR1; this interaction inhibits IE1 transactivating activity. Sumoylated by host PML/nuclear domain 10. Sumoylation abolishes the interaction with host STAT2 and thus the IE1-mediated repression of interferon-stimulated genes.

The protein resides in the host nucleus. In terms of biological role, plays an important role in transactivating viral early genes as well as activating its own promoter, probably by altering the viral chromatin structure. Expression of IE1 and IE2 proteins is critical for the establishment of lytic infection and reactivation from viral latency. Disrupts PML-associated ND10 nuclear bodies by interfering with host PML and SP100 sumoylation thereby altering the regulation of type I and type II interferon-induced gene expression. Promotes efficient viral growth by interacting with and directing host SP100 to degradation, leading to enhanced acetylation level of histones. In addition, functions in counteracting the host innate antiviral response. Inhibits the type I interferon pathway by directly interacting with and sequestrating host STAT2. Also targets type II interferon pathway by repressing IL6- and STAT3 target genes. Repression of STAT3 genes is due to STAT3 nuclear accumulation and disruption of IL6-induced STAT3 phosphorylation by IE1. This repression is followed by phosphorylation and activation of STAT1. Inhibits host ISG transcription by sequestering host ISGF3 in a PML- and STAT2- binding dependent manner. Alters host cell cycle progression, probably through its interaction with host E2F1 or RB1 that overcomes the RB1-mediated repression of E2F-responsive promoters. May act as a E3 ubiquitin ligase targeting several host proteins including HES1 and SP100A for ubiquitination and subsequent proteasomal degradation. Impairs the radial migration of immature neurons by downregulating Gap junction alpha-1 protein/GJA1 also via ubiquitination and degradation. This Human cytomegalovirus (strain Towne) (HHV-5) protein is Immediate early protein IE1 (UL123).